A 179-amino-acid chain; its full sequence is Putative endogenous retrovirus group FC1 Env polyprotein (179 aa).

The first 22 residues, Met-1–Ser-22, serve as a signal peptide directing secretion. Residues Asn-23 to Val-179 form a truncated surface protein region. Asn-69 is a glycosylation site (N-linked (GlcNAc...) asparagine).

This sequence belongs to the gamma type-C retroviral envelope protein family. HERV class-I F(c)1 env subfamily.

Its subcellular location is the virion. In terms of biological role, retroviral envelope proteins mediate receptor recognition and membrane fusion during early infection. Endogenous envelope proteins may have kept, lost or modified their original function during evolution. This chain is Putative endogenous retrovirus group FC1 Env polyprotein (ERVFC1), found in Gorilla gorilla gorilla (Western lowland gorilla).